A 275-amino-acid polypeptide reads, in one-letter code: NAD kinase (275 aa).

The active-site Proton acceptor is the Asp53. NAD(+) is bound by residues 53–54 (DG), 129–130 (NE), Arg155, Asp157, and 168–173 (TAYNKS).

This sequence belongs to the NAD kinase family. A divalent metal cation serves as cofactor.

The protein resides in the cytoplasm. The catalysed reaction is NAD(+) + ATP = ADP + NADP(+) + H(+). Functionally, involved in the regulation of the intracellular balance of NAD and NADP, and is a key enzyme in the biosynthesis of NADP. Catalyzes specifically the phosphorylation on 2'-hydroxyl of the adenosine moiety of NAD to yield NADP. This is NAD kinase from Streptococcus agalactiae serotype Ia (strain ATCC 27591 / A909 / CDC SS700).